Here is a 258-residue protein sequence, read N- to C-terminus: Deoxyribose-phosphate aldolase (258 aa).

Aspartate 102 acts as the Proton donor/acceptor in catalysis. Lysine 165 functions as the Schiff-base intermediate with acetaldehyde in the catalytic mechanism. The Proton donor/acceptor role is filled by lysine 199.

This sequence belongs to the DeoC/FbaB aldolase family. DeoC type 2 subfamily.

Its subcellular location is the cytoplasm. The enzyme catalyses 2-deoxy-D-ribose 5-phosphate = D-glyceraldehyde 3-phosphate + acetaldehyde. Its pathway is carbohydrate degradation; 2-deoxy-D-ribose 1-phosphate degradation; D-glyceraldehyde 3-phosphate and acetaldehyde from 2-deoxy-alpha-D-ribose 1-phosphate: step 2/2. Its function is as follows. Catalyzes a reversible aldol reaction between acetaldehyde and D-glyceraldehyde 3-phosphate to generate 2-deoxy-D-ribose 5-phosphate. In Vibrio campbellii (strain ATCC BAA-1116), this protein is Deoxyribose-phosphate aldolase.